Here is a 1442-residue protein sequence, read N- to C-terminus: Clustered mitochondria protein homolog (1442 aa).

Disordered stretches follow at residues 38 to 100 (NYRN…KKPD) and 237 to 258 (GRSESVDCTPPEHIMPGAKDRP). Over residues 82-100 (SEGEQQKDKTAAEDKKKPD) the composition is skewed to basic and acidic residues. In terms of domain architecture, Clu spans 394–636 (RAEDTFSSKL…RTFPPDVNFL (243 aa)). 2 stretches are compositionally biased toward basic and acidic residues: residues 696–714 (QKQEAKDSKDSEKKEEPKA) and 737–763 (ESKEECPKKGSTDKAKDKSAGVPKVET). 2 disordered regions span residues 696 to 763 (QKQE…KVET) and 949 to 984 (SESDALTKSGSSGGKQQRRQNKRSAGSKGGKPSFQC). The segment covering 949-958 (SESDALTKSG) has biased composition (polar residues). 3 TPR repeats span residues 1087–1120 (AYNFYTTGQSKIQQGYFKDGYDLISEALNLLNNV), 1213–1246 (ALLDSNISLILHAVGEYELSLRFLEHALALNIKY), and 1248–1281 (GEKSLKVAVSYHLVARTQSCMGDFRSALNNEKET). The interval 1373-1442 (RQKEGGTSEQ…SSNASAQQVS (70 aa)) is disordered. Residues 1380 to 1390 (SEQAAAAQASQ) are compositionally biased toward low complexity. A compositionally biased stretch (polar residues) spans 1424–1442 (ASSSKQADNSSNASAQQVS).

This sequence belongs to the CLU family.

The protein localises to the cytoplasm. Functionally, mRNA-binding protein involved in proper cytoplasmic distribution of mitochondria. In Aedes aegypti (Yellowfever mosquito), this protein is Clustered mitochondria protein homolog.